Reading from the N-terminus, the 324-residue chain is Phospho-N-acetylmuramoyl-pentapeptide-transferase (324 aa).

The next 10 helical transmembrane spans lie at 5-25 (IIVIAMAVSFLITVILSPLFI), 52-72 (PTMGGIMILLSIIATTVWVTA), 76-96 (VLSAGTYLLLFVTIGYGVLGF), 117-137 (FIGQLIIAVIFFFVYRQSGFS), 147-167 (WSFDLGWAYGVLLLFMLVGGS), 176-196 (LDGLLAGTAAIAFGAYAVLAW), 203-223 (VAVFCVAVVGAVLGFLVFNAH), 227-247 (VFMGDTGSLALGGAIAAVAVL), 250-270 (LELLLVVIGGVFVIETLSVII), and 302-322 (IVVTFWAVGLLFAMLGIYIEV).

This sequence belongs to the glycosyltransferase 4 family. MraY subfamily. Requires Mg(2+) as cofactor.

It localises to the cell membrane. It carries out the reaction UDP-N-acetyl-alpha-D-muramoyl-L-alanyl-gamma-D-glutamyl-meso-2,6-diaminopimeloyl-D-alanyl-D-alanine + di-trans,octa-cis-undecaprenyl phosphate = di-trans,octa-cis-undecaprenyl diphospho-N-acetyl-alpha-D-muramoyl-L-alanyl-D-glutamyl-meso-2,6-diaminopimeloyl-D-alanyl-D-alanine + UMP. It participates in cell wall biogenesis; peptidoglycan biosynthesis. Its function is as follows. Catalyzes the initial step of the lipid cycle reactions in the biosynthesis of the cell wall peptidoglycan: transfers peptidoglycan precursor phospho-MurNAc-pentapeptide from UDP-MurNAc-pentapeptide onto the lipid carrier undecaprenyl phosphate, yielding undecaprenyl-pyrophosphoryl-MurNAc-pentapeptide, known as lipid I. This Geobacillus thermodenitrificans (strain NG80-2) protein is Phospho-N-acetylmuramoyl-pentapeptide-transferase.